Reading from the N-terminus, the 152-residue chain is Ribosome maturation factor RimP (152 aa).

This sequence belongs to the RimP family.

It is found in the cytoplasm. Its function is as follows. Required for maturation of 30S ribosomal subunits. The sequence is that of Ribosome maturation factor RimP from Yersinia enterocolitica serotype O:8 / biotype 1B (strain NCTC 13174 / 8081).